The chain runs to 669 residues: DNA ligase (669 aa).

Residues 33–37 (DAEYD), 82–83 (SL), and Glu-114 contribute to the NAD(+) site. The active-site N6-AMP-lysine intermediate is Lys-116. NAD(+) contacts are provided by Arg-137, Glu-174, Lys-291, and Lys-315. Positions 409, 412, 427, and 433 each coordinate Zn(2+). In terms of domain architecture, BRCT spans 593-669 (EIPQPLAGKV…QTEQDLLALL (77 aa)).

This sequence belongs to the NAD-dependent DNA ligase family. LigA subfamily. It depends on Mg(2+) as a cofactor. Requires Mn(2+) as cofactor.

It carries out the reaction NAD(+) + (deoxyribonucleotide)n-3'-hydroxyl + 5'-phospho-(deoxyribonucleotide)m = (deoxyribonucleotide)n+m + AMP + beta-nicotinamide D-nucleotide.. DNA ligase that catalyzes the formation of phosphodiester linkages between 5'-phosphoryl and 3'-hydroxyl groups in double-stranded DNA using NAD as a coenzyme and as the energy source for the reaction. It is essential for DNA replication and repair of damaged DNA. The chain is DNA ligase from Vibrio vulnificus (strain CMCP6).